The primary structure comprises 95 residues: Cytochrome b (95 aa).

The next 3 helical transmembrane spans lie at 1-16, 40-61, and 76-95; these read GLCLASQLLTGLFLAM, WLIRNMHANGASFFFICIYLHI, and WNIGVVLLLLVMMTAFVGYV. 2 residues coordinate heme b: H46 and H60.

This sequence belongs to the cytochrome b family. In terms of assembly, the cytochrome bc1 complex contains 3 respiratory subunits (MT-CYB, CYC1 and UQCRFS1), 2 core proteins (UQCRC1 and UQCRC2) and probably 6 low-molecular weight proteins. The cofactor is heme b.

The protein localises to the mitochondrion inner membrane. In terms of biological role, component of the ubiquinol-cytochrome c reductase complex (complex III or cytochrome b-c1 complex) that is part of the mitochondrial respiratory chain. The b-c1 complex mediates electron transfer from ubiquinol to cytochrome c. Contributes to the generation of a proton gradient across the mitochondrial membrane that is then used for ATP synthesis. In Gomphosus varius (Bird wrasse), this protein is Cytochrome b (mt-cyb).